Here is a 576-residue protein sequence, read N- to C-terminus: Aspartate--tRNA ligase (576 aa).

Glu173 contributes to the L-aspartate binding site. The tract at residues 197–200 is aspartate; it reads QLFK. An L-aspartate-binding site is contributed by Arg219. Residues 219–221 and Gln228 each bind ATP; that span reads RDE. His438 contributes to the L-aspartate binding site. An ATP-binding site is contributed by Glu470. Residue Arg477 coordinates L-aspartate. 522–525 provides a ligand contact to ATP; it reads GLDR.

This sequence belongs to the class-II aminoacyl-tRNA synthetase family. Type 1 subfamily. Homodimer.

It localises to the cytoplasm. The catalysed reaction is tRNA(Asp) + L-aspartate + ATP = L-aspartyl-tRNA(Asp) + AMP + diphosphate. Functionally, catalyzes the attachment of L-aspartate to tRNA(Asp) in a two-step reaction: L-aspartate is first activated by ATP to form Asp-AMP and then transferred to the acceptor end of tRNA(Asp). This is Aspartate--tRNA ligase from Aster yellows witches'-broom phytoplasma (strain AYWB).